Consider the following 739-residue polypeptide: Eukaryotic translation initiation factor 3 subunit B (739 aa).

Residues 39–125 (AFVVIDGLPV…HTLAVNKLTD (87 aa)) form the RRM domain. 5 WD repeats span residues 191 to 229 (RDHW…KQKQ), 231 to 288 (PHPF…RSFV), 457 to 498 (SLKD…SFFA), 516 to 559 (IEKK…EKPE), and 574 to 612 (NEHF…HTFS).

Belongs to the eIF-3 subunit B family. In terms of assembly, component of the eukaryotic translation initiation factor 3 (eIF-3) complex.

It is found in the cytoplasm. Its function is as follows. RNA-binding component of the eukaryotic translation initiation factor 3 (eIF-3) complex, which is involved in protein synthesis of a specialized repertoire of mRNAs and, together with other initiation factors, stimulates binding of mRNA and methionyl-tRNAi to the 40S ribosome. The eIF-3 complex specifically targets and initiates translation of a subset of mRNAs involved in cell proliferation. This is Eukaryotic translation initiation factor 3 subunit B from Coccidioides immitis (strain RS) (Valley fever fungus).